Here is a 327-residue protein sequence, read N- to C-terminus: tRNA dimethylallyltransferase (327 aa).

14–21 (GPTASGKT) is an ATP binding site. Substrate is bound at residue 16 to 21 (TASGKT). 2 interaction with substrate tRNA regions span residues 39–42 (DSAL) and 163–167 (QRIQR).

Belongs to the IPP transferase family. Monomer. Requires Mg(2+) as cofactor.

It catalyses the reaction adenosine(37) in tRNA + dimethylallyl diphosphate = N(6)-dimethylallyladenosine(37) in tRNA + diphosphate. Functionally, catalyzes the transfer of a dimethylallyl group onto the adenine at position 37 in tRNAs that read codons beginning with uridine, leading to the formation of N6-(dimethylallyl)adenosine (i(6)A). The chain is tRNA dimethylallyltransferase from Xanthomonas campestris pv. campestris (strain 8004).